A 559-amino-acid polypeptide reads, in one-letter code: Oxygen-dependent choline dehydrogenase (559 aa).

4 to 33 (DYIIIGAGSAGNVLATRLTEDSDVTVLLLE) provides a ligand contact to FAD. His-473 (proton acceptor) is an active-site residue.

It belongs to the GMC oxidoreductase family. FAD serves as cofactor.

It carries out the reaction choline + A = betaine aldehyde + AH2. The enzyme catalyses betaine aldehyde + NAD(+) + H2O = glycine betaine + NADH + 2 H(+). It participates in amine and polyamine biosynthesis; betaine biosynthesis via choline pathway; betaine aldehyde from choline (cytochrome c reductase route): step 1/1. Involved in the biosynthesis of the osmoprotectant glycine betaine. Catalyzes the oxidation of choline to betaine aldehyde and betaine aldehyde to glycine betaine at the same rate. In Cronobacter sakazakii (strain ATCC BAA-894) (Enterobacter sakazakii), this protein is Oxygen-dependent choline dehydrogenase.